The following is a 300-amino-acid chain: Light-independent protochlorophyllide reductase iron-sulfur ATP-binding protein (300 aa).

ATP is bound by residues 43–48 (GIGKST) and K72. Residue S47 coordinates Mg(2+). [4Fe-4S] cluster contacts are provided by C128 and C162. 213-214 (NR) is an ATP binding site.

It belongs to the NifH/BchL/ChlL family. In terms of assembly, homodimer. Protochlorophyllide reductase is composed of three subunits; ChlL, ChlN and ChlB. The cofactor is [4Fe-4S] cluster.

The enzyme catalyses chlorophyllide a + oxidized 2[4Fe-4S]-[ferredoxin] + 2 ADP + 2 phosphate = protochlorophyllide a + reduced 2[4Fe-4S]-[ferredoxin] + 2 ATP + 2 H2O. It participates in porphyrin-containing compound metabolism; chlorophyll biosynthesis (light-independent). In terms of biological role, component of the dark-operative protochlorophyllide reductase (DPOR) that uses Mg-ATP and reduced ferredoxin to reduce ring D of protochlorophyllide (Pchlide) to form chlorophyllide a (Chlide). This reaction is light-independent. The L component serves as a unique electron donor to the NB-component of the complex, and binds Mg-ATP. This Synechococcus sp. (strain RCC307) protein is Light-independent protochlorophyllide reductase iron-sulfur ATP-binding protein.